Reading from the N-terminus, the 482-residue chain is Iroquois-class homeodomain protein irx-5 (482 aa).

Residues 109 to 171 (DPAYRKNATR…NARRRLKKEN (63 aa)) constitute a DNA-binding region (homeobox). 2 disordered regions span residues 173 to 307 (MTWT…HQSH) and 462 to 482 (QSQA…MSSI). Residues 182-198 (EDEEDDENIDLEKNEED) are compositionally biased toward acidic residues. Positions 199 to 256 (DPRKLEEKGDQDGDAGDQKRSPSAVDFDRLEGEVRQGKELDQTRSDSEQNEVEERNDL) are enriched in basic and acidic residues. Residues 264-273 (PTSPLCPPDQ) are compositionally biased toward pro residues. The segment covering 284-305 (HRHTVHNHHHQSIQQLHHHSHQ) has biased composition (basic residues). Positions 467-482 (LNKDTPYEMKKGMSSI) are enriched in basic and acidic residues.

Belongs to the TALE/IRO homeobox family. Expressed in the neural plate in overlapping patterns with other irx members, which all share an anterior border of expression. Broadly expressed in the tailbud rhombencephalon (hindbrain). Outside the nervous system and at tailbud stages, expressed in the developing otic vesicle and branchial arches.

The protein resides in the nucleus. Acts partially redundantly with other irx members in neural patterning. Required for formation of the posterior forebrain, midbrain, hindbrain, and to a lesser extent, spinal cord. Patterns the neuroectoderm in both the anterior/posterior and dorsal/ventral axes. Does not appear to play a role in pronephros kidney development. Involved in craniofacial and gonadal development. Modulates the migration of progenitor cell populations in branchial arches and gonads by repressing CXCL12. In Xenopus tropicalis (Western clawed frog), this protein is Iroquois-class homeodomain protein irx-5.